The primary structure comprises 1798 residues: Non-reducing polyketide synthase nscA (1798 aa).

The tract at residues 25-256 (RRLDQHSKDR…PLPVYDGLCH (232 aa)) is N-terminal acylcarrier protein transacylase domain (SAT). The Ketosynthase family 3 (KS3) domain occupies 392-825 (SSKLAIVGMA…GGNTTLLLED (434 aa)). Residues 436-455 (NTHYDPTGKTENTTQTPYGN) form a disordered region. Residues 444–453 (KTENTTQTPY) are compositionally biased toward polar residues. Active-site for beta-ketoacyl synthase activity residues include C565, H700, and H743. The tract at residues 931–1230 (FTGQGAYYHG…PSASAMSSCR (300 aa)) is malonyl-CoA:ACP transacylase (MAT) domain. Residues 1322–1458 (HQITAETVEA…AMIRFEDPVA (137 aa)) form an N-terminal hotdog fold region. The region spanning 1322-1632 (HQITAETVEA…FRRVPRLLMD (311 aa)) is the PKS/mFAS DH domain. The Proton acceptor; for dehydratase activity role is filled by H1354. The interval 1390-1628 (HMNLTDVEVL…GMIRFRRVPR (239 aa)) is product template (PT) domain. A C-terminal hotdog fold region spans residues 1486–1632 (ASRLSKPLAY…FRRVPRLLMD (147 aa)). D1543 acts as the Proton donor; for dehydratase activity in catalysis. The disordered stretch occupies residues 1685–1719 (MASKAPEPAPLLATSSESSTPKESPIVTPAESERA). The span at 1698–1709 (TSSESSTPKESP) shows a compositional bias: low complexity. The region spanning 1721–1798 (PVDNNMISQC…EMTAWIEEYC (78 aa)) is the Carrier domain. The residue at position 1758 (S1758) is an O-(pantetheine 4'-phosphoryl)serine.

The cofactor is pantetheine 4'-phosphate.

It participates in secondary metabolite biosynthesis. In terms of biological role, non-reducing polyketide synthase; part of the gene cluster that mediates the biosynthesis of neosartoricin B, a prenylated anthracenone that probably exhibits T-cell antiproliferative activity, suggestive of a physiological role as an immunosuppressive agent. The non-reducing polyketide synthase nscA probably synthesizes and cyclizes the decaketide backbone. The hydrolase nscB then mediates the product release through hydrolysis followed by spontaneous decarboxylation. The prenyltransferase nscD catalyzes the addition of the dimethylallyl group to the aromatic C5. The FAD-dependent monooxygenase nscC is then responsible for the stereospecific hydroxylation at C2. Neosartoricin B can be converted into two additional compounds neosartoricins C and D. Neosartoricin C is a spirocyclic compound that is cyclized through the attack of C3 hydroxyl on C14, followed by dehydration. On the other hand, neosartoricin D is a further cyclized compound in which attack of C2 on C14 in neosartoricin C results in the formation of the acetal-containing dioxabicyclo-octanone ring. Both of these compounds are novel and possibly represent related metabolites of the gene cluster. This is Non-reducing polyketide synthase nscA from Arthroderma benhamiae (strain ATCC MYA-4681 / CBS 112371) (Trichophyton mentagrophytes).